The sequence spans 226 residues: Adenosine 5'-phosphosulfate reductase (226 aa).

[4Fe-4S] cluster is bound by residues cysteine 112, cysteine 113, cysteine 195, and cysteine 198. Cysteine 221 serves as the catalytic Nucleophile; cysteine thiosulfonate intermediate.

Belongs to the PAPS reductase family. CysH subfamily. Requires [4Fe-4S] cluster as cofactor.

Its subcellular location is the cytoplasm. The catalysed reaction is [thioredoxin]-disulfide + sulfite + AMP + 2 H(+) = adenosine 5'-phosphosulfate + [thioredoxin]-dithiol. Its pathway is sulfur metabolism; hydrogen sulfide biosynthesis; sulfite from sulfate. Its function is as follows. Catalyzes the formation of sulfite from adenosine 5'-phosphosulfate (APS) using thioredoxin as an electron donor. This is Adenosine 5'-phosphosulfate reductase from Bacillus anthracis (strain A0248).